The chain runs to 443 residues: Serine--tRNA ligase (443 aa).

246-248 contributes to the L-serine binding site; the sequence is TAE. An ATP-binding site is contributed by 277-279; it reads RAE. Glutamate 300 provides a ligand contact to L-serine. Position 367-370 (367-370) interacts with ATP; the sequence is EISS. Serine 402 is an L-serine binding site.

The protein belongs to the class-II aminoacyl-tRNA synthetase family. Type-1 seryl-tRNA synthetase subfamily. In terms of assembly, homodimer. The tRNA molecule binds across the dimer.

It localises to the cytoplasm. It catalyses the reaction tRNA(Ser) + L-serine + ATP = L-seryl-tRNA(Ser) + AMP + diphosphate + H(+). The catalysed reaction is tRNA(Sec) + L-serine + ATP = L-seryl-tRNA(Sec) + AMP + diphosphate + H(+). Its pathway is aminoacyl-tRNA biosynthesis; selenocysteinyl-tRNA(Sec) biosynthesis; L-seryl-tRNA(Sec) from L-serine and tRNA(Sec): step 1/1. Catalyzes the attachment of serine to tRNA(Ser). Is also able to aminoacylate tRNA(Sec) with serine, to form the misacylated tRNA L-seryl-tRNA(Sec), which will be further converted into selenocysteinyl-tRNA(Sec). The protein is Serine--tRNA ligase of Bradyrhizobium diazoefficiens (strain JCM 10833 / BCRC 13528 / IAM 13628 / NBRC 14792 / USDA 110).